Here is a 536-residue protein sequence, read N- to C-terminus: Chaperonin GroEL (536 aa).

ATP contacts are provided by residues threonine 29 to proline 32, aspartate 86 to threonine 90, glycine 412, and aspartate 493.

It belongs to the chaperonin (HSP60) family. As to quaternary structure, forms a cylinder of 14 subunits composed of two heptameric rings stacked back-to-back. Interacts with the co-chaperonin GroES.

Its subcellular location is the cytoplasm. It catalyses the reaction ATP + H2O + a folded polypeptide = ADP + phosphate + an unfolded polypeptide.. Functionally, together with its co-chaperonin GroES, plays an essential role in assisting protein folding. The GroEL-GroES system forms a nano-cage that allows encapsulation of the non-native substrate proteins and provides a physical environment optimized to promote and accelerate protein folding. The sequence is that of Chaperonin GroEL from Onion yellows phytoplasma (strain OY-M).